The sequence spans 539 residues: Phosphoenolpyruvate carboxykinase (ATP) (539 aa).

3 residues coordinate substrate: Arg-64, Tyr-206, and Lys-212. Residues Lys-212, His-231, and 247 to 255 (GLSGTGKTT) contribute to the ATP site. Positions 212 and 231 each coordinate Mn(2+). Asp-268 serves as a coordination point for Mn(2+). ATP-binding positions include Glu-296, Arg-332, 448–449 (RI), and Thr-454. Arg-332 serves as a coordination point for substrate.

This sequence belongs to the phosphoenolpyruvate carboxykinase (ATP) family. Monomer. Requires Mn(2+) as cofactor.

The protein resides in the cytoplasm. The catalysed reaction is oxaloacetate + ATP = phosphoenolpyruvate + ADP + CO2. The protein operates within carbohydrate biosynthesis; gluconeogenesis. Its function is as follows. Involved in the gluconeogenesis. Catalyzes the conversion of oxaloacetate (OAA) to phosphoenolpyruvate (PEP) through direct phosphoryl transfer between the nucleoside triphosphate and OAA. In Pectobacterium carotovorum subsp. carotovorum (strain PC1), this protein is Phosphoenolpyruvate carboxykinase (ATP).